The chain runs to 1092 residues: Elongation factor 3 (1092 aa).

Val92 is a binding site for ADP. HEAT repeat units follow at residues 95–133, 138–175, 177–214, 218–255, 257–293, 294–331, and 333–370; these read MVKT…SPVS, PYMI…RLTP, ATKQ…TAPR, TAVP…LINN, DIEK…EVLP, PTLA…LVEK, and QIIA…KILT. Glu454 is a binding site for ADP. ABC transporter domains lie at 486 to 704 and 730 to 1044; these read EELC…YYEL and LKVQ…DKNK. Positions 766, 973, 976, and 1002 each coordinate ADP. 2 disordered regions span residues 1023 to 1044 and 1063 to 1092; these read TPTG…DKNK and SKLS…DDDE. Residues 1063 to 1075 are compositionally biased toward basic residues; the sequence is SKLSGKDLRKKRK. A compositionally biased stretch (basic and acidic residues) spans 1076–1086; sequence EREARRKRGEE.

It belongs to the ABC transporter superfamily. ABCF family. EF3 subfamily.

It localises to the cytoplasm. The protein localises to the cytosol. The catalysed reaction is ATP + H2O = ADP + phosphate + H(+). It participates in protein biosynthesis; polypeptide chain elongation. Ribosome-dependent ATPase that functions in cytoplasmic translation elongation. Required for the ATP-dependent release of deacylated tRNA from the ribosomal E-site during protein biosynthesis. Stimulates the eEF1A-dependent binding of aminoacyl-tRNA to the ribosomal A-site, which has reduced affinity for tRNA as long as the E-site is occupied. Assists translation termination by stimulating the release of nascent protein from the ribosome by release factors. In Gonapodya prolifera (strain JEL478) (Monoblepharis prolifera), this protein is Elongation factor 3.